A 546-amino-acid polypeptide reads, in one-letter code: Chaperonin GroEL 1 (546 aa).

ATP-binding positions include 30–33, Lys51, 87–91, Gly415, 479–481, and Asp495; these read TLGP, DGTTT, and NAA. The disordered stretch occupies residues 526–546; the sequence is KEDAPMPGGMPGGMGGMGMDM. Residues 534–546 show a composition bias toward gly residues; sequence GMPGGMGGMGMDM.

Belongs to the chaperonin (HSP60) family. As to quaternary structure, forms a cylinder of 14 subunits composed of two heptameric rings stacked back-to-back. Interacts with the co-chaperonin GroES.

The protein resides in the cytoplasm. It carries out the reaction ATP + H2O + a folded polypeptide = ADP + phosphate + an unfolded polypeptide.. Functionally, together with its co-chaperonin GroES, plays an essential role in assisting protein folding. The GroEL-GroES system forms a nano-cage that allows encapsulation of the non-native substrate proteins and provides a physical environment optimized to promote and accelerate protein folding. This chain is Chaperonin GroEL 1, found in Burkholderia vietnamiensis (strain G4 / LMG 22486) (Burkholderia cepacia (strain R1808)).